Here is a 389-residue protein sequence, read N- to C-terminus: Leucine aminopeptidase 1 (389 aa).

A signal peptide spans 1-18; the sequence is MKSAALLLPLYAAAFAAA. Positions 19–89 are excised as a propeptide; sequence AFHHEHAQAV…TLKRRINAAS (71 aa). A glycan (N-linked (GlcNAc...) asparagine) is linked at Asn99. Zn(2+) contacts are provided by His188, Asp207, Glu246, and Asp273. An intrachain disulfide couples Cys322 to Cys326. Residue His355 participates in Zn(2+) binding.

This sequence belongs to the peptidase M28 family. M28E subfamily. As to quaternary structure, monomer. It depends on Zn(2+) as a cofactor.

It localises to the secreted. In terms of biological role, extracellular aminopeptidase that allows assimilation of proteinaceous substrates. This Pyrenophora teres f. teres (strain 0-1) (Barley net blotch fungus) protein is Leucine aminopeptidase 1 (lap1).